We begin with the raw amino-acid sequence, 514 residues long: ATP synthase subunit alpha (514 aa).

Position 170 to 177 (170 to 177) interacts with ATP; the sequence is GDRQTGKT.

The protein belongs to the ATPase alpha/beta chains family. In terms of assembly, F-type ATPases have 2 components, CF(1) - the catalytic core - and CF(0) - the membrane proton channel. CF(1) has five subunits: alpha(3), beta(3), gamma(1), delta(1), epsilon(1). CF(0) has three main subunits: a(1), b(2) and c(9-12). The alpha and beta chains form an alternating ring which encloses part of the gamma chain. CF(1) is attached to CF(0) by a central stalk formed by the gamma and epsilon chains, while a peripheral stalk is formed by the delta and b chains.

Its subcellular location is the cell inner membrane. It catalyses the reaction ATP + H2O + 4 H(+)(in) = ADP + phosphate + 5 H(+)(out). In terms of biological role, produces ATP from ADP in the presence of a proton gradient across the membrane. The alpha chain is a regulatory subunit. The polypeptide is ATP synthase subunit alpha (Acidithiobacillus ferridurans).